Consider the following 254-residue polypeptide: Bidirectional sugar transporter SWEET6b (254 aa).

Residues 1–9 (MISPDAARN) lie on the Extracellular side of the membrane. A helical membrane pass occupies residues 10 to 30 (VVGIIGNVISFGLFLAPVPTF). Residues 10–98 (VVGIIGNVIS…IFFLYSPNKK (89 aa)) form the MtN3/slv 1 domain. Over 31-45 (WRICKRKDVEEFKAD) the chain is Cytoplasmic. The chain crosses the membrane as a helical span at residues 46–66 (PYLATLLNCMLWVFYGIPIVH). Residues 67 to 69 (PNS) lie on the Extracellular side of the membrane. A helical transmembrane segment spans residues 70-90 (ILVVTINGIGLVVEGTYLFIF). Topologically, residues 91–101 (FLYSPNKKRLR) are cytoplasmic. The chain crosses the membrane as a helical span at residues 102 to 122 (MLAVLGVELVFMLAVILGVLL). The Extracellular segment spans residues 123-131 (GAHTHKKRS). Residues 132-152 (MIVGILCVFFGSIMYFSPLTI) form a helical membrane-spanning segment. Positions 133–216 (IVGILCVFFG…LILYACYYRT (84 aa)) constitute a MtN3/slv 2 domain. Residues 153 to 165 (MGKVIKTKSVEYM) are Cytoplasmic-facing. A helical membrane pass occupies residues 166 to 186 (PFFLSLVCFLNGVCWTAYALI). At 187–189 (RFD) the chain is on the extracellular side. The chain crosses the membrane as a helical span at residues 190–210 (IYVTIPNSLGAIFGAIQLILY). Residues 211 to 254 (ACYYRTTPKKTKAAKDVEMPSVISGPGAAATASGGSVVSVTVER) are Cytoplasmic-facing.

It belongs to the SWEET sugar transporter family. Forms homooligomers and/or heterooligomers.

It is found in the cell membrane. Functionally, mediates both low-affinity uptake and efflux of sugar across the plasma membrane. The sequence is that of Bidirectional sugar transporter SWEET6b (SWEET6B) from Oryza sativa subsp. indica (Rice).